Consider the following 195-residue polypeptide: uncharacterized protein (195 aa).

2 disordered regions span residues 1 to 51 and 160 to 195; these read MTHN…GPSY and SYSQQQEPQHYYKKHKHHSHHRPKHVKSSRSCKSCN. Residues 13 to 28 are compositionally biased toward polar residues; that stretch reads SYQNQAPQPQYYTRQP. Residues 170 to 189 show a composition bias toward basic residues; the sequence is YYKKHKHHSHHRPKHVKSSR.

This is an uncharacterized protein from Acanthamoeba polyphaga mimivirus (APMV).